The sequence spans 670 residues: Solute carrier organic anion transporter family member 1A3 (670 aa).

The Cytoplasmic portion of the chain corresponds to 1–20; sequence MGDLEKGAATHGAGCFAKIK. A helical transmembrane segment spans residues 21-40; it reads VFLMALTCAYVSKSLSGTFM. At 41–59 the chain is on the extracellular side; it reads SSMLTQIERQFGIPTAIVG. A helical membrane pass occupies residues 60 to 80; it reads FINGSFEIGNLLLIIFVSYFG. Residues 81–86 lie on the Cytoplasmic side of the membrane; sequence MKLHRP. Residues 87 to 111 form a helical membrane-spanning segment; it reads IVIGVGCAVMGLGCFIISLPHFLMG. The Extracellular portion of the chain corresponds to 112-155; it reads RYEYETTILPTSNLSSNSFLCMENQTQTLNPAQDPAECVKEVKS. Residues N124 and N135 are each glycosylated (N-linked (GlcNAc...) asparagine). A helical membrane pass occupies residues 156 to 184; the sequence is LMWIYVLVGNIIRGIGETPIMPLGVSYIE. Residues 185–203 lie on the Cytoplasmic side of the membrane; that stretch reads NFAKSENSPLYIGILETGK. A helical membrane pass occupies residues 204 to 224; it reads MIGPIFGLLLGSFCASIYVDT. Topologically, residues 225–242 are extracellular; that stretch reads GSVNTDDLTITPTDIRWV. A helical membrane pass occupies residues 243 to 267; it reads GAWWIGFLVCAGVNILISIPFFFFP. Over 268-311 the chain is Cytoplasmic; it reads KTLPKEGLQENVDGTENAKEESTEKRPRKKNRGITKDFFPFLKS. Positions 277-296 are disordered; the sequence is ENVDGTENAKEESTEKRPRK. Residues 283–292 are compositionally biased toward basic and acidic residues; it reads ENAKEESTEK. Residues 312–333 traverse the membrane as a helical segment; that stretch reads PVLQPDLHAVHPYKVLQVNAFN. Residues 334–353 are Extracellular-facing; it reads IYFSFLPKYLENQYGKSTAE. A helical transmembrane segment spans residues 354-377; sequence VIFLMGVYNLPAICIGYLIAGFMM. The Cytoplasmic segment spans residues 378–381; sequence KKFK. A helical membrane pass occupies residues 382–405; that stretch reads ITVKTAAFLAFCLSLSEYSFGFCN. Topologically, residues 406–513 are extracellular; sequence FLITCDNVPV…PECTNKLQYL (108 aa). A Kazal-like domain is found at 433–488; that stretch reads NNVLADCNTRCSCLTKTWDPVCGDNGLAYMSACLAGCEKSVGTGTNMVFHNCSCIQ. Disulfide bonds link C439/C469, C445/C465, and C454/C486. N-linked (GlcNAc...) asparagine glycosylation is found at N483 and N492. Residues 514 to 536 traverse the membrane as a helical segment; that stretch reads LILSGFLSILYSFAAIPGYMVFL. Residues 537-545 lie on the Cytoplasmic side of the membrane; the sequence is RCIKSEEKS. Residues 546–571 traverse the membrane as a helical segment; sequence LGIGIHAFCIRVFAGIPAPIYFGALI. Residues 572-605 are Extracellular-facing; sequence DRTCLHWGTQKCGAPGACRMYDINSFRRIYLGMS. The chain crosses the membrane as a helical span at residues 606–623; it reads AALRGSSYLPAFVIVILT. Over 624–670 the chain is Cytoplasmic; sequence RKFSLPGKINSSEMEIAEMKLTEKESQCTDVHRNPKFKNDGELKTKL.

The protein belongs to the organo anion transporter (TC 2.A.60) family. All isoforms are detected in kidney, and many are kidney specific. Isoforms 2 and 13 are also detected in liver. Isoforms 4 and 9/K4 are ubiquitous, but isoform 9/K13 is kidney specific. Isoforms 5 and 14 are detected in all tissues tested, with the exception of pancreas and spleen. Isoforms 11 and 15 are detected in kidney, pancreas and testis. Isoform 7 is detected in kidney, liver, testis and spleen.

The protein resides in the cell membrane. Mediates the Na(+)-independent transport of organic anions such as methotrexate, taurocholate, folate and prostaglandin E2. May contribute to renal secretion and/or reabsorption of hydrophobic anionic compounds. Mediates renal clearance of methotrexate from the blood. This chain is Solute carrier organic anion transporter family member 1A3 (Slco1a3), found in Rattus norvegicus (Rat).